We begin with the raw amino-acid sequence, 946 residues long: ATP-dependent 6-phosphofructokinase subunit beta (946 aa).

Positions 1-559 are N-terminal catalytic PFK domain 1; that stretch reads MISIVNGTST…HLANFMAMNT (559 aa). ATP contacts are provided by residues glycine 192, 256–257, and 286–289; these read RC and GDGS. Residue aspartate 287 participates in Mg(2+) binding. Residues 332–334, arginine 369, 376–378, glutamate 433, arginine 461, and 467–470 each bind beta-D-fructose 6-phosphate; these read SID, MGR, and HVQR. Aspartate 334 acts as the Proton acceptor in catalysis. Residues 560-573 are interdomain linker; that stretch reads ANHEKPTLPREKRK. Positions 574 to 946 are C-terminal regulatory PFK domain 2; it reads KIAIINIGAP…LVGRTRLDKP (373 aa). Beta-D-fructose 2,6-bisphosphate is bound by residues arginine 644, 702 to 706, 747 to 749, lysine 833, 839 to 842, and arginine 920; these read TISNN, QGG, and HVQQ.

It belongs to the phosphofructokinase type A (PFKA) family. ATP-dependent PFK group I subfamily. Eukaryotic two domain clade 'E' sub-subfamily. As to quaternary structure, heterooctamer of 4 alpha and 4 beta chains. Mg(2+) is required as a cofactor.

The protein localises to the cytoplasm. The catalysed reaction is beta-D-fructose 6-phosphate + ATP = beta-D-fructose 1,6-bisphosphate + ADP + H(+). Its pathway is carbohydrate degradation; glycolysis; D-glyceraldehyde 3-phosphate and glycerone phosphate from D-glucose: step 3/4. With respect to regulation, allosterically activated by ADP, AMP, or fructose 2,6-bisphosphate, and allosterically inhibited by ATP or citrate. Functionally, catalyzes the phosphorylation of D-fructose 6-phosphate to fructose 1,6-bisphosphate by ATP, the first committing step of glycolysis. In Candida albicans (Yeast), this protein is ATP-dependent 6-phosphofructokinase subunit beta (PFK2).